Consider the following 462-residue polypeptide: Cytochrome P450 20A1 (462 aa).

Residues 4-24 (FAIFAVTFLLALVGAVLYLYP) form a helical membrane-spanning segment. Cysteine 409 contributes to the heme binding site.

The protein belongs to the cytochrome P450 family. Heme is required as a cofactor.

It localises to the membrane. This is Cytochrome P450 20A1 (CYP20A1) from Bos taurus (Bovine).